The chain runs to 124 residues: Small ribosomal subunit protein uS12 (124 aa).

Asp89 is modified (3-methylthioaspartic acid).

This sequence belongs to the universal ribosomal protein uS12 family. Part of the 30S ribosomal subunit. Contacts proteins S8 and S17. May interact with IF1 in the 30S initiation complex.

Its function is as follows. With S4 and S5 plays an important role in translational accuracy. Functionally, interacts with and stabilizes bases of the 16S rRNA that are involved in tRNA selection in the A site and with the mRNA backbone. Located at the interface of the 30S and 50S subunits, it traverses the body of the 30S subunit contacting proteins on the other side and probably holding the rRNA structure together. The combined cluster of proteins S8, S12 and S17 appears to hold together the shoulder and platform of the 30S subunit. This is Small ribosomal subunit protein uS12 from Shewanella piezotolerans (strain WP3 / JCM 13877).